Consider the following 546-residue polypeptide: Arginine--tRNA ligase (546 aa).

A 'HIGH' region motif is present at residues 117–127; it reads ANPTGPLHIGR.

It belongs to the class-I aminoacyl-tRNA synthetase family.

It localises to the cytoplasm. The catalysed reaction is tRNA(Arg) + L-arginine + ATP = L-arginyl-tRNA(Arg) + AMP + diphosphate. The chain is Arginine--tRNA ligase from Thermoplasma acidophilum (strain ATCC 25905 / DSM 1728 / JCM 9062 / NBRC 15155 / AMRC-C165).